Consider the following 158-residue polypeptide: NAD(P)H-quinone oxidoreductase subunit J, chloroplastic (158 aa).

Belongs to the complex I 30 kDa subunit family. As to quaternary structure, NDH is composed of at least 16 different subunits, 5 of which are encoded in the nucleus.

Its subcellular location is the plastid. The protein localises to the chloroplast thylakoid membrane. The enzyme catalyses a plastoquinone + NADH + (n+1) H(+)(in) = a plastoquinol + NAD(+) + n H(+)(out). It catalyses the reaction a plastoquinone + NADPH + (n+1) H(+)(in) = a plastoquinol + NADP(+) + n H(+)(out). In terms of biological role, NDH shuttles electrons from NAD(P)H:plastoquinone, via FMN and iron-sulfur (Fe-S) centers, to quinones in the photosynthetic chain and possibly in a chloroplast respiratory chain. The immediate electron acceptor for the enzyme in this species is believed to be plastoquinone. Couples the redox reaction to proton translocation, and thus conserves the redox energy in a proton gradient. This chain is NAD(P)H-quinone oxidoreductase subunit J, chloroplastic, found in Dioscorea elephantipes (Elephant's foot yam).